Here is a 412-residue protein sequence, read N- to C-terminus: uncharacterized protein (412 aa).

His49 lines the Zn(2+) pocket. Glu52 acts as the Proton acceptor in catalysis. Zn(2+) is bound by residues His53 and Glu129.

The protein belongs to the peptidase M16 family. It depends on Zn(2+) as a cofactor.

This is an uncharacterized protein from Rickettsia felis (strain ATCC VR-1525 / URRWXCal2) (Rickettsia azadi).